The primary structure comprises 56 residues: Large ribosomal subunit protein bL32 (56 aa).

Residues 1–26 are disordered; sequence MAVQQNKKSRSKRGMRRSHDALSTAQ. Residues 7 to 16 show a composition bias toward basic residues; that stretch reads KKSRSKRGMR.

It belongs to the bacterial ribosomal protein bL32 family.

This is Large ribosomal subunit protein bL32 from Shewanella baltica (strain OS155 / ATCC BAA-1091).